Consider the following 223-residue polypeptide: Protein-lysine N-methyltransferase CG9154 (223 aa).

The protein belongs to the class I-like SAM-binding methyltransferase superfamily. EFM5 family.

The protein resides in the cytoplasm. In terms of biological role, S-adenosyl-L-methionine-dependent protein-lysine N-methyltransferase that methylates elongation factor 1-alpha. In Drosophila melanogaster (Fruit fly), this protein is Protein-lysine N-methyltransferase CG9154.